The sequence spans 514 residues: 23S rRNA (uracil(1939)-C(5))-methyltransferase RlmD (514 aa).

Positions 70, 76, 79, and 158 each coordinate [4Fe-4S] cluster. Residues Q272, F301, N306, E322, N350, and D371 each coordinate S-adenosyl-L-methionine. Catalysis depends on C398, which acts as the Nucleophile.

It belongs to the class I-like SAM-binding methyltransferase superfamily. RNA M5U methyltransferase family. RlmD subfamily.

The enzyme catalyses uridine(1939) in 23S rRNA + S-adenosyl-L-methionine = 5-methyluridine(1939) in 23S rRNA + S-adenosyl-L-homocysteine + H(+). Its function is as follows. Catalyzes the formation of 5-methyl-uridine at position 1939 (m5U1939) in 23S rRNA. The protein is 23S rRNA (uracil(1939)-C(5))-methyltransferase RlmD of Chromobacterium violaceum (strain ATCC 12472 / DSM 30191 / JCM 1249 / CCUG 213 / NBRC 12614 / NCIMB 9131 / NCTC 9757 / MK).